Reading from the N-terminus, the 191-residue chain is PBAN-type neuropeptides (191 aa).

A signal peptide spans 1–17; the sequence is MFSPLLFFAVSISCVLA. Leu-44 carries the leucine amide modification. The propeptide occupies 48–91; it reads SLRISTEDNRQAFFKLLEAADALKYYYDRLPYEMQADEPETRVT. Leucine amide occurs at positions 100, 120, 156, and 166. The propeptide occupies 169-191; that stretch reads ELSYDMLPSKLRLVRSTNRTQST.

It belongs to the pyrokinin family. As to expression, expressed in the subesophageal ganglion.

The protein localises to the secreted. Functionally, a hormone that controls sex pheromone production in females and pheromone responsiveness in male. The protein is PBAN-type neuropeptides of Spodoptera littoralis (Egyptian cotton leafworm).